Consider the following 77-residue polypeptide: Sec-independent protein translocase protein TatA (77 aa).

Residues 1-21 form a helical membrane-spanning segment; that stretch reads MGSLSIWHWIVVIAVVLLLFG. Positions 43-60 are enriched in basic and acidic residues; the sequence is MQDDDKAPEKTEPVKSID. The disordered stretch occupies residues 43-77; it reads MQDDDKAPEKTEPVKSIDHGATPSATRTDVGSKAV.

It belongs to the TatA/E family. As to quaternary structure, the Tat system comprises two distinct complexes: a TatABC complex, containing multiple copies of TatA, TatB and TatC subunits, and a separate TatA complex, containing only TatA subunits. Substrates initially bind to the TatABC complex, which probably triggers association of the separate TatA complex to form the active translocon.

It localises to the cell inner membrane. In terms of biological role, part of the twin-arginine translocation (Tat) system that transports large folded proteins containing a characteristic twin-arginine motif in their signal peptide across membranes. TatA could form the protein-conducting channel of the Tat system. This chain is Sec-independent protein translocase protein TatA, found in Bradyrhizobium sp. (strain BTAi1 / ATCC BAA-1182).